The primary structure comprises 693 residues: Putative transmembrane protein ORF68 (693 aa).

The N-terminal stretch at 1-17 (MILTIILYTLLFSTCSA) is a signal peptide. Topologically, residues 18–666 (QSVHTMPEAV…WLTKFGTGGG (649 aa)) are extracellular. Residues 208 to 256 (SKAANNRMDALEDGMKNINTRVTETNLLLEKLSTEVTGALTQLENEIKM) are a coiled coil. A helical membrane pass occupies residues 667–687 (IAGVTIGLLLPILAIVFSCYV). Topologically, residues 688 to 693 (FCKRRV) are cytoplasmic.

It is found in the host membrane. This chain is Putative transmembrane protein ORF68, found in Magallana gigas (Pacific oyster).